We begin with the raw amino-acid sequence, 105 residues long: Phosphoribosyl-AMP cyclohydrolase (105 aa).

Asp-72 serves as a coordination point for Mg(2+). Residue Cys-73 coordinates Zn(2+). Mg(2+)-binding residues include Asp-74 and Asp-76. 2 residues coordinate Zn(2+): Cys-89 and Cys-96.

This sequence belongs to the PRA-CH family. As to quaternary structure, homodimer. The cofactor is Mg(2+). Zn(2+) serves as cofactor.

Its subcellular location is the cytoplasm. The catalysed reaction is 1-(5-phospho-beta-D-ribosyl)-5'-AMP + H2O = 1-(5-phospho-beta-D-ribosyl)-5-[(5-phospho-beta-D-ribosylamino)methylideneamino]imidazole-4-carboxamide. The protein operates within amino-acid biosynthesis; L-histidine biosynthesis; L-histidine from 5-phospho-alpha-D-ribose 1-diphosphate: step 3/9. Catalyzes the hydrolysis of the adenine ring of phosphoribosyl-AMP. The protein is Phosphoribosyl-AMP cyclohydrolase of Listeria monocytogenes serotype 4b (strain CLIP80459).